Here is a 37-residue protein sequence, read N- to C-terminus: Large ribosomal subunit protein bL36 (37 aa).

Belongs to the bacterial ribosomal protein bL36 family.

The protein is Large ribosomal subunit protein bL36 of Clostridioides difficile (strain 630) (Peptoclostridium difficile).